A 470-amino-acid chain; its full sequence is Sorting nexin-17 (470 aa).

Residues 1-109 (MHFSIPETES…SFLRRAQQET (109 aa)) enclose the PX domain. A 1,2-diacyl-sn-glycero-3-phospho-(1D-myo-inositol-3-phosphate) is bound by residues R36, S38, K62, and R75. In terms of domain architecture, Ras-associating spans 115–206 (EEVSLEVLLS…YKIVLRKSYW (92 aa)). The interval 115–432 (EEVSLEVLLS…DASRESMVKL (318 aa)) is FERM-like. Positions 270 to 432 (GYLRFDACVA…DASRESMVKL (163 aa)) are PTB-like F3 module. The segment at 401 to 425 (GGNLRRSDSQQAVKSPPLLESPDAS) is disordered. Residues S407, S409, S415, S421, S437, and S440 each carry the phosphoserine modification.

It belongs to the sorting nexin family. As to quaternary structure, monomer. Interacts with APP (via cytoplasmic YXNPXY motif). Interacts with KIF1B. Interacts with the C-termini of P-selectin, PTC, LDLR, VLDLR, LRP1 and LRP8. Interacts with KRIT1 (via N-terminus). Interacts with HRAS. Interacts with ITGB1 and ITGB5 (via NPxY motif). Interacts with CCDC22 and CCDC93; the interaction associates SNX17 with the CCC complex. Interacts (via C-terminus) with VPS26C and VPS35L; the interactions are direct and associate SNX17 with the retriever complex.

The protein resides in the cytoplasm. The protein localises to the early endosome. It is found in the cytoplasmic vesicle membrane. In terms of biological role, critical regulator of endosomal recycling of numerous surface proteins, including integrins, signaling receptor and channels. Binds to NPxY sequences in the cytoplasmic tails of target cargos. Associates with retriever and CCC complexes to prevent lysosomal degradation and promote cell surface recycling of numerous cargos such as integrins ITGB1, ITGB5 and their associated alpha subunits. Also required for maintenance of normal cell surface levels of APP and LRP1. Interacts with membranes containing phosphatidylinositol 3-phosphate (PtdIns(3P)). The polypeptide is Sorting nexin-17 (Snx17) (Rattus norvegicus (Rat)).